The primary structure comprises 280 residues: 4-hydroxy-3-methylbut-2-enyl diphosphate reductase (280 aa).

Position 12 (C12) interacts with [4Fe-4S] cluster. (2E)-4-hydroxy-3-methylbut-2-enyl diphosphate-binding residues include H40 and H72. The dimethylallyl diphosphate site is built by H40 and H72. Positions 40 and 72 each coordinate isopentenyl diphosphate. A [4Fe-4S] cluster-binding site is contributed by C94. H122 contacts (2E)-4-hydroxy-3-methylbut-2-enyl diphosphate. Residue H122 participates in dimethylallyl diphosphate binding. H122 lines the isopentenyl diphosphate pocket. The active-site Proton donor is the E124. T160 contacts (2E)-4-hydroxy-3-methylbut-2-enyl diphosphate. [4Fe-4S] cluster is bound at residue C188. Residues S216, N218, and S260 each coordinate (2E)-4-hydroxy-3-methylbut-2-enyl diphosphate. Residues S216, N218, and S260 each coordinate dimethylallyl diphosphate. 3 residues coordinate isopentenyl diphosphate: S216, N218, and S260.

Belongs to the IspH family. The cofactor is [4Fe-4S] cluster.

The catalysed reaction is isopentenyl diphosphate + 2 oxidized [2Fe-2S]-[ferredoxin] + H2O = (2E)-4-hydroxy-3-methylbut-2-enyl diphosphate + 2 reduced [2Fe-2S]-[ferredoxin] + 2 H(+). The enzyme catalyses dimethylallyl diphosphate + 2 oxidized [2Fe-2S]-[ferredoxin] + H2O = (2E)-4-hydroxy-3-methylbut-2-enyl diphosphate + 2 reduced [2Fe-2S]-[ferredoxin] + 2 H(+). Its pathway is isoprenoid biosynthesis; dimethylallyl diphosphate biosynthesis; dimethylallyl diphosphate from (2E)-4-hydroxy-3-methylbutenyl diphosphate: step 1/1. The protein operates within isoprenoid biosynthesis; isopentenyl diphosphate biosynthesis via DXP pathway; isopentenyl diphosphate from 1-deoxy-D-xylulose 5-phosphate: step 6/6. Catalyzes the conversion of 1-hydroxy-2-methyl-2-(E)-butenyl 4-diphosphate (HMBPP) into a mixture of isopentenyl diphosphate (IPP) and dimethylallyl diphosphate (DMAPP). Acts in the terminal step of the DOXP/MEP pathway for isoprenoid precursor biosynthesis. The chain is 4-hydroxy-3-methylbut-2-enyl diphosphate reductase from Pelobacter propionicus (strain DSM 2379 / NBRC 103807 / OttBd1).